The chain runs to 386 residues: Cobalt-precorrin-5B C(1)-methyltransferase (386 aa).

It belongs to the CbiD family.

It carries out the reaction Co-precorrin-5B + S-adenosyl-L-methionine = Co-precorrin-6A + S-adenosyl-L-homocysteine. Its pathway is cofactor biosynthesis; adenosylcobalamin biosynthesis; cob(II)yrinate a,c-diamide from sirohydrochlorin (anaerobic route): step 6/10. Catalyzes the methylation of C-1 in cobalt-precorrin-5B to form cobalt-precorrin-6A. This chain is Cobalt-precorrin-5B C(1)-methyltransferase, found in Prochlorococcus marinus (strain MIT 9303).